A 322-amino-acid chain; its full sequence is Homoserine kinase (322 aa).

Residue 107–117 (PLSSGMGGSAA) participates in ATP binding.

This sequence belongs to the GHMP kinase family. Homoserine kinase subfamily.

It localises to the cytoplasm. It catalyses the reaction L-homoserine + ATP = O-phospho-L-homoserine + ADP + H(+). It functions in the pathway amino-acid biosynthesis; L-threonine biosynthesis; L-threonine from L-aspartate: step 4/5. In terms of biological role, catalyzes the ATP-dependent phosphorylation of L-homoserine to L-homoserine phosphate. This chain is Homoserine kinase, found in Xylella fastidiosa (strain 9a5c).